The following is a 36-amino-acid chain: Lambda-hexatoxin-Hv1b (36 aa).

Intrachain disulfides connect cysteine 3/cysteine 17, cysteine 10/cysteine 22, cysteine 13/cysteine 14, and cysteine 16/cysteine 33.

This sequence belongs to the neurotoxin 11 (kappa toxin) family. As to expression, expressed by the venom gland.

Its subcellular location is the secreted. Functionally, this excitatory toxin inhibits insect calcium-activated potassium (KCa) channels (Slo-type). The polypeptide is Lambda-hexatoxin-Hv1b (Hadronyche versuta (Blue mountains funnel-web spider)).